The sequence spans 486 residues: Elastin-binding protein EbpS (486 aa).

Basic and acidic residues predominate over residues 1–40; that stretch reads MSNNFKDDFEKNRQSIDTNSHQDHTEDVEKDQSELEHQDT. The interval 1–314 is disordered; sequence MSNNFKDDFE…NHDRDKERKK (314 aa). Residues 2–204 lie on the Extracellular side of the membrane; that stretch reads SNNFKDDFEK…EPKEHHNGKK (203 aa). An elastin-binding region spans residues 14 to 34; sequence QSIDTNSHQDHTEDVEKDQSE. Over residues 64–85 the composition is skewed to polar residues; sequence TNHNKQVHNESQTSEDNVQNEA. Basic and acidic residues-rich tracts occupy residues 103–118 and 126–143; these read EPSH…EEYY and DKSH…DTIK. Polar residues predominate over residues 161–179; it reads EQSQQPKPYFTTGANQSET. Residues 180 to 199 are compositionally biased toward basic and acidic residues; that stretch reads SKNEHDNDSVKQDQDEPKEH. Residues 204-225 show a composition bias toward low complexity; sequence KAAAIGAGTAGVAGAAGAMAAS. Residues 205-225 traverse the membrane as a helical segment; it reads AAAIGAGTAGVAGAAGAMAAS. The Cytoplasmic portion of the chain corresponds to 226 to 319; the sequence is KAKKHSNDAQ…KERKKGGMAK (94 aa). Residues 233 to 246 are compositionally biased toward polar residues; the sequence is DAQNKSNSGKANNS. A compositionally biased stretch (basic and acidic residues) spans 247 to 259; the sequence is TEDKASQDKSKDH. Low complexity predominate over residues 278 to 297; the sequence is GAASKSASAASKPHASNNAS. Positions 299–314 are enriched in basic and acidic residues; that stretch reads NHDEHDNHDRDKERKK. Residues 320 to 340 traverse the membrane as a helical segment; sequence VLLPLIAAVLIIGALAIFGGM. Residues 341-486 are Extracellular-facing; sequence ALNNHNNGTK…IRNGQQIVIP (146 aa). The segment at 351–440 is disordered; sequence ENKIANTNKN…QRQGGGQRHT (90 aa). Residues 361-398 are compositionally biased toward basic and acidic residues; sequence NADESKDKDTSKDASKDKSKSTDSDKSKEDQDKATKDE. Residues 403–431 are compositionally biased toward low complexity; the sequence is QNNANQANNQAQNNQNQQQANQNQQQQQQ. The 49-residue stretch at 437–485 folds into the LysM domain; the sequence is QRHTVNGQENLYRIAIQYYGSGSPENVEKIRRANGLSGNNIRNGQQIVI.

The protein resides in the cell membrane. In terms of biological role, promotes binding of soluble elastin peptides and tropoelastin to S.aureus cells although it is not able to promote bacterial adherence to immobilized elastin and, therefore, is not a microbial surface component recognizing adhesive matrix molecule (MSCRAMM). This Staphylococcus aureus (strain USA300) protein is Elastin-binding protein EbpS (ebpS).